The chain runs to 523 residues: GMP synthase [glutamine-hydrolyzing] (523 aa).

The Glutamine amidotransferase type-1 domain occupies 8–205; sequence RILILDFGSQ…IRELCECEAL (198 aa). Catalysis depends on C85, which acts as the Nucleophile. Residues H179 and E181 contribute to the active site. Residues 206 to 398 form the GMPS ATP-PPase domain; that stretch reads WTPSNIISDA…LGLPYDMVYR (193 aa). 233-239 is an ATP binding site; that stretch reads SGGVDSS.

As to quaternary structure, homodimer.

It catalyses the reaction XMP + L-glutamine + ATP + H2O = GMP + L-glutamate + AMP + diphosphate + 2 H(+). The protein operates within purine metabolism; GMP biosynthesis; GMP from XMP (L-Gln route): step 1/1. Catalyzes the synthesis of GMP from XMP. This is GMP synthase [glutamine-hydrolyzing] from Alcanivorax borkumensis (strain ATCC 700651 / DSM 11573 / NCIMB 13689 / SK2).